We begin with the raw amino-acid sequence, 47 residues long: Sperm protamine P1 (47 aa).

Belongs to the protamine P1 family. As to expression, testis.

The protein localises to the nucleus. Its subcellular location is the chromosome. Its function is as follows. Protamines substitute for histones in the chromatin of sperm during the haploid phase of spermatogenesis. They compact sperm DNA into a highly condensed, stable and inactive complex. The sequence is that of Sperm protamine P1 (PRM1) from Myotis daubentonii (Daubenton's bat).